The sequence spans 135 residues: Small ribosomal subunit protein uS11 (135 aa).

The protein belongs to the universal ribosomal protein uS11 family. In terms of assembly, part of the 30S ribosomal subunit. Interacts with proteins S7 and S18. Binds to IF-3.

In terms of biological role, located on the platform of the 30S subunit, it bridges several disparate RNA helices of the 16S rRNA. Forms part of the Shine-Dalgarno cleft in the 70S ribosome. The polypeptide is Small ribosomal subunit protein uS11 (Cutibacterium acnes (strain DSM 16379 / KPA171202) (Propionibacterium acnes)).